The primary structure comprises 475 residues: Gustatory and pheromone receptor 33a (475 aa).

Residues 1–34 are Cytoplasmic-facing; the sequence is MIQIMNWFSMVIGLIPLNRQQSETNFILDYAMMC. Residues 35 to 55 form a helical membrane-spanning segment; sequence IVPIFYVACYLLINLSHIIGL. Topologically, residues 56 to 68 are extracellular; that stretch reads CLLDSCNSVCKLS. Residues 69 to 89 traverse the membrane as a helical segment; sequence SHLFMHLGAFLYLTITLLSLY. Residues 90-128 lie on the Cytoplasmic side of the membrane; that stretch reads RRKEFFQQFDARLNDIDAVIQKCQRVAEMDKVKVTAVKH. The chain crosses the membrane as a helical span at residues 129–149; that stretch reads SVAYHFTWLFLFCVFTFALYY. Residues 150 to 158 are Extracellular-facing; the sequence is DVRSLYLTF. A helical membrane pass occupies residues 159–179; it reads GNLAFIPFMVSSFPYLAGSII. Topologically, residues 180 to 319 are cytoplasmic; sequence QGEFIYHVSV…LALSVITNGE (140 aa). The disordered stretch occupies residues 243–281; that stretch reads TGFGNENKFAGEMKRQEGQQKNDDDDLDTSNDEDEDDFD. The span at 251–264 shows a compositional bias: basic and acidic residues; sequence FAGEMKRQEGQQKN. Residues 265–281 show a composition bias toward acidic residues; that stretch reads DDDDLDTSNDEDEDDFD. A helical membrane pass occupies residues 320 to 340; that stretch reads FGPQCVPYMAACFVVSIFGIF. Topologically, residues 341–357 are extracellular; sequence LETKVNFIVGGKSRLLD. Residues 358–378 traverse the membrane as a helical segment; that stretch reads YMTYLYVIWSFTTMMVAYIVL. The Cytoplasmic portion of the chain corresponds to 379–441; sequence RLCCNANNHS…FNGVGLFALD (63 aa). The helical transmembrane segment at 442–462 threads the bilayer; it reads YTFIFSTVSAATSYLIVLLQF. The Extracellular portion of the chain corresponds to 463 to 475; it reads DMTAILRNEGLMS.

This sequence belongs to the insect chemoreceptor superfamily. Gustatory receptor (GR) family. Gr66a subfamily. Expressed widely in gustatory receptor neurons (GRNs) that respond to aversive chemicals. In larvae, is expressed in neurons of the terminal external chemosensory organ, and the dorsal, ventral and posterior external chemosensory organs.

The protein resides in the cell membrane. Gustatory receptor which mediates acceptance or avoidance behavior, depending on its substrates. Required for sensing all nonvolatile repulsive chemicals, including tastants, pheromones, and especially N,N-Diethyl-meta-toluamide (DEET), the most widely used insect repellent worldwide. Also functions as a pheromone receptor for a male inhibitory pheromone leading to male-male courtship suppression. In Drosophila melanogaster (Fruit fly), this protein is Gustatory and pheromone receptor 33a (Gr33a).